The primary structure comprises 637 residues: Biosynthetic arginine decarboxylase (637 aa).

Position 101 is an N6-(pyridoxal phosphate)lysine (lysine 101). Residue 286–296 coordinates substrate; that stretch reads FDVGGGLAVDY.

The protein belongs to the Orn/Lys/Arg decarboxylase class-II family. SpeA subfamily. It depends on Mg(2+) as a cofactor. Pyridoxal 5'-phosphate serves as cofactor.

It carries out the reaction L-arginine + H(+) = agmatine + CO2. It functions in the pathway amine and polyamine biosynthesis; agmatine biosynthesis; agmatine from L-arginine: step 1/1. In terms of biological role, catalyzes the biosynthesis of agmatine from arginine. This is Biosynthetic arginine decarboxylase from Shewanella piezotolerans (strain WP3 / JCM 13877).